A 369-amino-acid chain; its full sequence is Small ribosomal subunit biogenesis GTPase RsgA (369 aa).

The CP-type G domain maps to 88–246 (RTVLERPPVA…LADTPGFNQP (159 aa)). Residues 137-140 (NKQD) and 188-196 (GPSGVGKSS) each bind GTP. Cys271, Cys276, His278, and Cys284 together coordinate Zn(2+). Residues 307–369 (QNPENSRETD…DLDNLQEDWE (63 aa)) are disordered. The segment covering 359-369 (TDLDNLQEDWE) has biased composition (acidic residues).

This sequence belongs to the TRAFAC class YlqF/YawG GTPase family. RsgA subfamily. In terms of assembly, monomer. Associates with 30S ribosomal subunit, binds 16S rRNA. Zn(2+) serves as cofactor.

The protein resides in the cytoplasm. Its function is as follows. One of several proteins that assist in the late maturation steps of the functional core of the 30S ribosomal subunit. Helps release RbfA from mature subunits. May play a role in the assembly of ribosomal proteins into the subunit. Circularly permuted GTPase that catalyzes slow GTP hydrolysis, GTPase activity is stimulated by the 30S ribosomal subunit. In Synechocystis sp. (strain ATCC 27184 / PCC 6803 / Kazusa), this protein is Small ribosomal subunit biogenesis GTPase RsgA.